We begin with the raw amino-acid sequence, 430 residues long: Adenylosuccinate synthetase (430 aa).

Residues 13-19 (GDEGKGK) and 41-43 (GHT) each bind GTP. Aspartate 14 (proton acceptor) is an active-site residue. 2 residues coordinate Mg(2+): aspartate 14 and glycine 41. IMP contacts are provided by residues 14–17 (DEGK), 39–42 (NAGH), threonine 130, arginine 144, glutamine 225, threonine 240, and arginine 304. The active-site Proton donor is the histidine 42. 300–306 (STTGRAR) contacts substrate. GTP contacts are provided by residues arginine 306, 332 to 334 (KLD), and 414 to 416 (STG).

Belongs to the adenylosuccinate synthetase family. Homodimer. It depends on Mg(2+) as a cofactor.

The protein resides in the cytoplasm. It catalyses the reaction IMP + L-aspartate + GTP = N(6)-(1,2-dicarboxyethyl)-AMP + GDP + phosphate + 2 H(+). Its pathway is purine metabolism; AMP biosynthesis via de novo pathway; AMP from IMP: step 1/2. In terms of biological role, plays an important role in the de novo pathway of purine nucleotide biosynthesis. Catalyzes the first committed step in the biosynthesis of AMP from IMP. In Pseudomonas putida (strain W619), this protein is Adenylosuccinate synthetase.